The chain runs to 210 residues: Thiamine-phosphate synthase (210 aa).

4-amino-2-methyl-5-(diphosphooxymethyl)pyrimidine-binding positions include 39–43 (QLREK) and N71. Residues D72 and D91 each coordinate Mg(2+). S110 contacts 4-amino-2-methyl-5-(diphosphooxymethyl)pyrimidine. 134-136 (TPT) is a 2-[(2R,5Z)-2-carboxy-4-methylthiazol-5(2H)-ylidene]ethyl phosphate binding site. K137 contacts 4-amino-2-methyl-5-(diphosphooxymethyl)pyrimidine. G163 contributes to the 2-[(2R,5Z)-2-carboxy-4-methylthiazol-5(2H)-ylidene]ethyl phosphate binding site.

It belongs to the thiamine-phosphate synthase family. Requires Mg(2+) as cofactor.

It carries out the reaction 2-[(2R,5Z)-2-carboxy-4-methylthiazol-5(2H)-ylidene]ethyl phosphate + 4-amino-2-methyl-5-(diphosphooxymethyl)pyrimidine + 2 H(+) = thiamine phosphate + CO2 + diphosphate. It catalyses the reaction 2-(2-carboxy-4-methylthiazol-5-yl)ethyl phosphate + 4-amino-2-methyl-5-(diphosphooxymethyl)pyrimidine + 2 H(+) = thiamine phosphate + CO2 + diphosphate. The catalysed reaction is 4-methyl-5-(2-phosphooxyethyl)-thiazole + 4-amino-2-methyl-5-(diphosphooxymethyl)pyrimidine + H(+) = thiamine phosphate + diphosphate. It functions in the pathway cofactor biosynthesis; thiamine diphosphate biosynthesis; thiamine phosphate from 4-amino-2-methyl-5-diphosphomethylpyrimidine and 4-methyl-5-(2-phosphoethyl)-thiazole: step 1/1. Condenses 4-methyl-5-(beta-hydroxyethyl)thiazole monophosphate (THZ-P) and 2-methyl-4-amino-5-hydroxymethyl pyrimidine pyrophosphate (HMP-PP) to form thiamine monophosphate (TMP). In Campylobacter jejuni (strain RM1221), this protein is Thiamine-phosphate synthase.